Consider the following 100-residue polypeptide: Competence protein ComGE (100 aa).

A helical transmembrane segment spans residues 15 to 35 (VILLEAVVALAIFASIATLLL).

As to quaternary structure, the transformation pili are flexible filaments, consisting mainly of the major pilin ComGC and smaller amounts of the minor pilins, including at least ComGD, ComGF and ComGG, and perhaps ComGE. Interacts with ComGD. Interacts with ComGF. Interacts with ComGG.

It localises to the cell membrane. The protein localises to the cell surface. Its function is as follows. Required for formation of the type IV-like pilus (T4P) that plays a role in transformation. Transformation pili are dynamically extended and retracted, perhaps thereby promoting DNA uptake and transformation. Involved in transformation. Required for DNA binding. The polypeptide is Competence protein ComGE (Streptococcus pneumoniae (strain ATCC BAA-255 / R6)).